A 463-amino-acid polypeptide reads, in one-letter code: Asparagine--tRNA ligase (463 aa).

This sequence belongs to the class-II aminoacyl-tRNA synthetase family. Homodimer.

The protein resides in the cytoplasm. The enzyme catalyses tRNA(Asn) + L-asparagine + ATP = L-asparaginyl-tRNA(Asn) + AMP + diphosphate + H(+). The chain is Asparagine--tRNA ligase from Clostridium acetobutylicum (strain ATCC 824 / DSM 792 / JCM 1419 / IAM 19013 / LMG 5710 / NBRC 13948 / NRRL B-527 / VKM B-1787 / 2291 / W).